The following is a 2579-amino-acid chain: Ectopic P granules protein 5 homolog (2579 aa).

2 disordered regions span residues 1 to 46 and 92 to 132; these read MAEA…SREQ and NEES…GTKV. The segment covering 7 to 23 has biased composition (basic residues); the sequence is PQRRAKAKASRTKTKEK. The segment covering 24 to 34 has biased composition (basic and acidic residues); that stretch reads KKYETPQREES. The residue at position 134 (T134) is a Phosphothreonine. Residues 535-564 form a disordered region; the sequence is PSERKPSSSGPGSGTWTLVDEGGEEDEDPE. The span at 555-564 shows a compositional bias: acidic residues; it reads EGGEEDEDPE. Residues 1607 to 1633 adopt a coiled-coil conformation; the sequence is MHKNEAISQQLHVLRKEVKQLQAEAAK.

It belongs to the EPG5 family. Interacts with RAN.

It localises to the cytoplasm. It is found in the perinuclear region. The protein localises to the lysosome. Involved in autophagy. May play a role in a late step of autophagy, such as clearance of autophagosomal cargo. Plays a key role in innate and adaptive immune response triggered by unmethylated cytidine-phosphate-guanosine (CpG) dinucleotides from pathogens, and mediated by the nucleotide-sensing receptor TLR9. It is necessary for the translocation of CpG dinucleotides from early endosomes to late endosomes and lysosomes, where TLR9 is located. The sequence is that of Ectopic P granules protein 5 homolog (EPG5) from Homo sapiens (Human).